Reading from the N-terminus, the 865-residue chain is Xylosyltransferase 2 (865 aa).

The Cytoplasmic portion of the chain corresponds to 1 to 15 (MVASARVQKLVRRYK). The helical; Signal-anchor for type II membrane protein transmembrane segment at 16–36 (LAIATALAILLLQGLVVWSFS) threads the bilayer. Topologically, residues 37 to 865 (GLEEDEPGEK…GPVKADGRLR (829 aa)) are lumenal. Residues 39–155 (EEDEPGEKGR…SVEGAPQPTD (117 aa)) form a disordered region. Residues 53-65 (RPLDPGEGSKDTD) are compositionally biased toward basic and acidic residues. Over residues 73 to 82 (SAGRRHGRWR) the composition is skewed to basic residues. N-linked (GlcNAc...) asparagine glycosylation is present at Asn-122. Cystine bridges form between Cys-162-Cys-190, Cys-206-Cys-448, Cys-467-Cys-480, and Cys-469-Cys-478. UDP-alpha-D-xylose-binding positions include Val-239, Asp-267, and 296 to 298 (TIW). An N-linked (GlcNAc...) asparagine glycan is attached at Asn-327. Residue 400-401 (DW) participates in UDP-alpha-D-xylose binding. Residues Ser-481 and 504 to 505 (RK) contribute to the UDP-alpha-D-xylose site. Disulfide bonds link Cys-581–Cys-833 and Cys-826–Cys-839. Residue Asn-683 is glycosylated (N-linked (GlcNAc...) asparagine).

The protein belongs to the glycosyltransferase 14 family. XylT subfamily. In terms of assembly, monomer. Requires Mg(2+) as cofactor. It depends on Mn(2+) as a cofactor. In terms of processing, contains disulfide bonds. In terms of tissue distribution, detected in brain, liver, lung, kidney, heart, spleen and testis, and at lower levels in skeletal muscle.

The protein resides in the golgi apparatus membrane. It localises to the secreted. It carries out the reaction UDP-alpha-D-xylose + L-seryl-[protein] = 3-O-(beta-D-xylosyl)-L-seryl-[protein] + UDP + H(+). The protein operates within glycan metabolism; chondroitin sulfate biosynthesis. It participates in glycan metabolism; heparan sulfate biosynthesis. Functionally, catalyzes the first step in the biosynthesis of chondroitin sulfate, heparan sulfate and dermatan sulfate proteoglycans, such as DCN. Transfers D-xylose from UDP-D-xylose to specific serine residues of the core protein. The chain is Xylosyltransferase 2 (Xylt2) from Mus musculus (Mouse).